A 501-amino-acid chain; its full sequence is Ribose import ATP-binding protein RbsA (501 aa).

ABC transporter domains follow at residues Leu-5–Lys-241 and Ala-252–Leu-495. Gly-37 to Ser-44 provides a ligand contact to ATP.

It belongs to the ABC transporter superfamily. Ribose importer (TC 3.A.1.2.1) family. The complex is composed of an ATP-binding protein (RbsA), two transmembrane proteins (RbsC) and a solute-binding protein (RbsB).

The protein resides in the cell inner membrane. The catalysed reaction is D-ribose(out) + ATP + H2O = D-ribose(in) + ADP + phosphate + H(+). Part of the ABC transporter complex RbsABC involved in ribose import. Responsible for energy coupling to the transport system. This chain is Ribose import ATP-binding protein RbsA, found in Escherichia coli (strain UTI89 / UPEC).